We begin with the raw amino-acid sequence, 281 residues long: Nucleotide-binding protein TRQ2_1124 (281 aa).

ATP is bound at residue 9 to 16 (GLSGAGKT). Position 58–61 (58–61 (DVRS)) interacts with GTP.

The protein belongs to the RapZ-like family.

Functionally, displays ATPase and GTPase activities. The sequence is that of Nucleotide-binding protein TRQ2_1124 from Thermotoga sp. (strain RQ2).